We begin with the raw amino-acid sequence, 99 residues long: Nucleoid-associated protein SSU98_0195 (99 aa).

This sequence belongs to the YbaB/EbfC family. In terms of assembly, homodimer.

The protein localises to the cytoplasm. The protein resides in the nucleoid. Its function is as follows. Binds to DNA and alters its conformation. May be involved in regulation of gene expression, nucleoid organization and DNA protection. This Streptococcus suis (strain 98HAH33) protein is Nucleoid-associated protein SSU98_0195.